A 158-amino-acid chain; its full sequence is pH 6 antigen (158 aa).

An N-terminal signal peptide occupies residues 1–26 (MKMKCFAKNALAVTTLMIAACGMANA).

In terms of assembly, forms a homomer composed of subunits assembled in a large structure.

Its subcellular location is the fimbrium. Fibrillar structure, part of fimbriae, necessary for full virulence. In Yersinia pestis, this protein is pH 6 antigen (psaA).